We begin with the raw amino-acid sequence, 266 residues long: Ribonuclease 3 (266 aa).

One can recognise an RNase III domain in the interval 8–130 (LARLTKKLGY…IIGAVYLDSN (123 aa)). Position 43 (glutamate 43) interacts with Mg(2+). Aspartate 47 is a catalytic residue. Mg(2+) contacts are provided by aspartate 116 and glutamate 119. Glutamate 119 is an active-site residue. The region spanning 157 to 227 (DPKTRLQEFL…AQQILALIEK (71 aa)) is the DRBM domain. A disordered region spans residues 229 to 266 (REQEKEVKIKPTKQAKLANPRHTKSNPSSSSKKSSTRK). Over residues 253–266 (SNPSSSSKKSSTRK) the composition is skewed to low complexity.

The protein belongs to the ribonuclease III family. Homodimer. Mg(2+) is required as a cofactor.

The protein localises to the cytoplasm. It catalyses the reaction Endonucleolytic cleavage to 5'-phosphomonoester.. Digests double-stranded RNA. Involved in the processing of primary rRNA transcript to yield the immediate precursors to the large and small rRNAs (23S and 16S). Processes some mRNAs, and tRNAs when they are encoded in the rRNA operon. Processes pre-crRNA and tracrRNA of type II CRISPR loci if present in the organism. The protein is Ribonuclease 3 of Colwellia psychrerythraea (strain 34H / ATCC BAA-681) (Vibrio psychroerythus).